A 409-amino-acid polypeptide reads, in one-letter code: Multifunctional CCA protein (409 aa).

ATP-binding residues include G8 and R11. 2 residues coordinate CTP: G8 and R11. Residues E21 and D23 each coordinate Mg(2+). Residues R91, R137, and R140 each coordinate ATP. CTP is bound by residues R91, R137, and R140. In terms of domain architecture, HD spans 228–329 (TGVHTLMVLT…LKALEGLDAF (102 aa)).

This sequence belongs to the tRNA nucleotidyltransferase/poly(A) polymerase family. Bacterial CCA-adding enzyme type 1 subfamily. Monomer. Can also form homodimers and oligomers. It depends on Mg(2+) as a cofactor. Ni(2+) serves as cofactor.

It catalyses the reaction a tRNA precursor + 2 CTP + ATP = a tRNA with a 3' CCA end + 3 diphosphate. The enzyme catalyses a tRNA with a 3' CCA end + 2 CTP + ATP = a tRNA with a 3' CCACCA end + 3 diphosphate. In terms of biological role, catalyzes the addition and repair of the essential 3'-terminal CCA sequence in tRNAs without using a nucleic acid template. Adds these three nucleotides in the order of C, C, and A to the tRNA nucleotide-73, using CTP and ATP as substrates and producing inorganic pyrophosphate. tRNA 3'-terminal CCA addition is required both for tRNA processing and repair. Also involved in tRNA surveillance by mediating tandem CCA addition to generate a CCACCA at the 3' terminus of unstable tRNAs. While stable tRNAs receive only 3'-terminal CCA, unstable tRNAs are marked with CCACCA and rapidly degraded. The polypeptide is Multifunctional CCA protein (Thioalkalivibrio sulfidiphilus (strain HL-EbGR7)).